A 105-amino-acid chain; its full sequence is Synaptic plasticity regulator PANTS (105 aa).

It belongs to the UPF0545 family. In terms of assembly, interacts with RTN4 isoform A/Nogo-A; the interaction results in enhanced RTN4-mediated inhibition of AMPA receptor clustering. Also interacts with NCAM1, RANBP2 and CCT8. Rapidly degraded by proteolysis following neuronal stimulation, resulting in increased AMPA receptor clustering.

It is found in the synapse. The protein localises to the synaptic cleft. Functionally, negatively regulates long-term potentiation and modulates adult synaptic plasticity. Stabilizes the interaction of RTN4 isoform A/Nogo-A with its receptors, inhibiting clustering of postsynaptic AMPA receptors at synaptic sites. Upon neuronal stimulation, degraded at synapses, reducing RTN4 signaling and allowing AMPA receptor clustering at individual synapses. The sequence is that of Synaptic plasticity regulator PANTS from Pongo abelii (Sumatran orangutan).